The following is a 206-amino-acid chain: Inactive ribonuclease-like protein 9 (206 aa).

A signal peptide spans 1 to 26; sequence MMRTLITTHSLLLFLLLLQLLQPLQF. Disulfide bonds link C99/C154, C117/C169, and C124/C131. N-linked (GlcNAc...) asparagine glycosylation occurs at N132.

The protein belongs to the pancreatic ribonuclease family.

The protein localises to the secreted. In terms of biological role, does not exhibit any ribonuclease activity. This chain is Inactive ribonuclease-like protein 9 (RNASE9), found in Saimiri boliviensis boliviensis (Bolivian squirrel monkey).